The chain runs to 455 residues: MGRVSSIISFSLTLLILFNGYTAQQWPNECQLDQLNALEPSQIIKSEGGRIEVWDHHAPQLRCSGFAFERFVIEPQGLFLPTFLNAGKLTFVVHGRGLMGRVIPGCAETFMESPVFGEGQGQGQSQGFRDMHQKVEHLRCGDTIATPSGVAQWFYNNGNEPLILVAAADLASNQNQLDRNLRPFLIAGNNPQGQEWLQGRKQQKQNNIFNGFAPEILAQAFKINVETAQQLQNQQDNRGNIVKVNGPFGVIRPPLRRGEGGQQPHEIANGLEETLCTMRCTENLDDPSDADVYKPSLGYISTLNSYNLPILRLLRLSALRGSIRKNAMVLPQWNVNANAALYVTNGKAHIQMVNDNGERVFDQEISSGQLLVVPQGFSVMKHAIGEQFEWIEFKTNENAQVNTLAGRTSVMRGLPLEVITNGYQISPEEAKRVKFSTIETTLTHSSPMSYGRPRA.

The first 24 residues, 1-24 (MGRVSSIISFSLTLLILFNGYTAQ), serve as a signal peptide directing secretion. 2 disulfide bridges follow: Cys-30-Cys-63 and Cys-106-Cys-276. Cupin type-1 domains lie at 35–229 (LNAL…ETAQ) and 282–431 (ENLD…EEAK). Thr-109 is modified (phosphothreonine). At Tyr-299 the chain carries Phosphotyrosine. Ser-301 and Ser-367 each carry phosphoserine. A phosphothreonine mark is found at Thr-395 and Thr-420. Residue Ser-436 is modified to Phosphoserine.

Belongs to the 11S seed storage protein (globulins) family. As to quaternary structure, hexamer; each subunit is composed of an acidic and a basic chain derived from a single precursor and linked by a disulfide bond. Ubiquitinated. Post-translationally, proteolytically processed during seed maturation at a conserved Asn-Gly peptide bond by an asparaginyl endopeptidase to produce two mature polypeptides referred to as alpha and beta subunits that are joined together by a disulfide bond. In terms of processing, phosphorylated in seeds on some Tyr residues in response to abscisic acid (ABA). In terms of tissue distribution, accumulates in seeds 8 days after anthesis.

It localises to the protein storage vacuole. Functionally, seed storage protein. The protein is 12S seed storage protein CRB (CRB) of Arabidopsis thaliana (Mouse-ear cress).